The chain runs to 470 residues: MMMMGDSFGSIGSSMASLFFLWATIQQIFPDHLKITIKEFLLSSFQQLCFAQRVSDHFTNLFSPYVEIHFPESDEYSFNQAFSAIDTYLDSKATDKTKHLRGSQVKESKGLVLKRNEAKVRDEYKGANVWWERVVDNDGNRYYKLTFHNRARTLITNSYIKYVVEEGKSIIVKNKQTRLFTNNLSTQWVFGQNMWRSIEFEHPASFQTLAMDPKKKEEIVNDLIAFSNGKEYYKKIGKAWKRGYLLYGPPGTGKSTMISAMANLLNYNIYDLELTAVKNNSELKKLLTATSSKSIIVIEDIDCSADFTSNRIKKESNSRERYGKEDKDENSVTLSGLLNFIDGIWSACGQERIVVFTTNHLEKLDPALIRRGRMDMHIELSYCTYEAFKILAKNYLDLDGDDAHPLFSEIKALLEETKISPADVAENLMARNQQIDVDKSLNLLISALEEENQYQRSQQEKKKSKFKIFG.

A signal peptide spans Met-1 to Pro-30. Gly-248–Ser-255 provides a ligand contact to ATP.

This sequence belongs to the AAA ATPase family. BCS1 subfamily. Mg(2+) is required as a cofactor.

The enzyme catalyses ATP + H2O = ADP + phosphate + H(+). This is AAA-ATPase At5g40000 from Arabidopsis thaliana (Mouse-ear cress).